A 470-amino-acid chain; its full sequence is Poly(A) polymerase catalytic subunit (470 aa).

Active-site residues include Asp-192 and Asp-194.

The protein belongs to the poxviridae poly(A) polymerase catalytic subunit family. Heterodimer of a large (catalytic) subunit and a small (regulatory) subunit.

It carries out the reaction RNA(n) + ATP = RNA(n)-3'-adenine ribonucleotide + diphosphate. Functionally, polymerase that creates the 3'-poly(A) tail of mRNA's. This Erythrocebus patas (Red guenon) protein is Poly(A) polymerase catalytic subunit (PAPL).